The following is a 203-amino-acid chain: Small ribosomal subunit protein uS7 (203 aa).

Residues 1–22 (MSESEAPEPDQPAGAEEATGAK) form a disordered region.

It belongs to the universal ribosomal protein uS7 family. As to quaternary structure, part of the 30S ribosomal subunit.

In terms of biological role, one of the primary rRNA binding proteins, it binds directly to 16S rRNA where it nucleates assembly of the head domain of the 30S subunit. Is located at the subunit interface close to the decoding center. The protein is Small ribosomal subunit protein uS7 of Halococcus morrhuae (Micrococcus morrhuae).